We begin with the raw amino-acid sequence, 148 residues long: Probable glycine cleavage system H protein 2 (148 aa).

The region spanning 32–114 is the Lipoyl-binding domain; that stretch reads VIVVGITDIA…YGKGWLVKMK (83 aa). Lys73 carries the post-translational modification N6-lipoyllysine.

Belongs to the GcvH family. The glycine cleavage system is composed of four proteins: P, T, L and H. The cofactor is (R)-lipoate.

Its function is as follows. The glycine cleavage system catalyzes the degradation of glycine. The H protein shuttles the methylamine group of glycine from the P protein to the T protein. The polypeptide is Probable glycine cleavage system H protein 2 (Sulfurisphaera tokodaii (strain DSM 16993 / JCM 10545 / NBRC 100140 / 7) (Sulfolobus tokodaii)).